Consider the following 152-residue polypeptide: MDEQEIQRLVEEVSLQYFEMPFLHKAVFNNRLRTTGGRYLLKSHNIELNYRYYEVYGEEELVGIIKHELCHYHLHIAGRGYKHRDRDFRELLKKVDAPRFCKRMINEEKEKKIYKYECMECSLQYVRRRQINTKRYVCGKCKGKLKPISKTS.

The SprT-like domain occupies 7 to 147; that stretch reads QRLVEEVSLQ…CGKCKGKLKP (141 aa). Zn(2+) is bound at residue histidine 67. Glutamate 68 is a catalytic residue. Residue histidine 71 participates in Zn(2+) binding.

The protein belongs to the SprT family. Zn(2+) serves as cofactor.

It is found in the cytoplasm. The sequence is that of Protein SprT-like from Bacillus cereus (strain B4264).